A 296-amino-acid polypeptide reads, in one-letter code: Ribosomal protein L11 methyltransferase (296 aa).

Threonine 151, glycine 172, aspartate 194, and asparagine 233 together coordinate S-adenosyl-L-methionine.

This sequence belongs to the methyltransferase superfamily. PrmA family.

The protein localises to the cytoplasm. It carries out the reaction L-lysyl-[protein] + 3 S-adenosyl-L-methionine = N(6),N(6),N(6)-trimethyl-L-lysyl-[protein] + 3 S-adenosyl-L-homocysteine + 3 H(+). Its function is as follows. Methylates ribosomal protein L11. The sequence is that of Ribosomal protein L11 methyltransferase from Thiobacillus denitrificans (strain ATCC 25259 / T1).